The chain runs to 195 residues: CASP-like protein 1B1 (195 aa).

The Cytoplasmic portion of the chain corresponds to 1-22; it reads MGLQNEEKLELGCTGLQPKPKK. The helical transmembrane segment at 23 to 43 threads the bilayer; that stretch reads WVLLMVRVVAFLATAAATLVM. Topologically, residues 44 to 75 are extracellular; that stretch reads ALNKETKTLVVATVGNTPIKVTLTAKFQHTPA. A helical transmembrane segment spans residues 76–96; the sequence is FVFFVIANGMASFHNLLMIMV. Over 97 to 109 the chain is Cytoplasmic; sequence ELCGQKLDYKGMR. A helical membrane pass occupies residues 110 to 130; sequence LAMVAILDMMTVALVSGGASA. Residues 131-163 lie on the Extracellular side of the membrane; that stretch reads ATFMAELGKNGNSHARWDKICDKFETFCDHGGA. A helical membrane pass occupies residues 164 to 184; that stretch reads ALIASSAGLILMMIISVMSIM. The Cytoplasmic portion of the chain corresponds to 185–195; the sequence is KLLIKPKSDSS.

Belongs to the Casparian strip membrane proteins (CASP) family. As to quaternary structure, homodimer and heterodimers.

The protein resides in the cell membrane. This chain is CASP-like protein 1B1, found in Populus trichocarpa (Western balsam poplar).